A 613-amino-acid chain; its full sequence is Ribosome-associated molecular chaperone SSB1 (613 aa).

The nucleotide binding domain (NBD) stretch occupies residues 1 to 391 (MADGVFQGAI…ILTGQSTNDD (391 aa)). ATP is bound by residues 16–18 (TTY), Lys-73, 205–207 (GGT), 271–278 (ERAKRSLS), and Gly-342. Residues 392–402 (TKDLLLLDVIP) form an inter-domain linker region. Residues 403–613 (LSLGVAMQGN…RAVTKGMATR (211 aa)) are substrate binding domain (SBD). Residues 516–612 (TEEIEKMISD…KRAVTKGMAT (97 aa)) are lid domain (SBDalpha). The Nuclear export signal motif lies at 574 to 582 (IEAALSDAL).

Belongs to the heat shock protein 70 family. Ssb-type Hsp70 subfamily. In terms of assembly, binds to ribosomes. Binds close to the ribosomal tunnel exit via contacts with both ribosomal proteins and rRNA. Directly interacts with nascent polypeptides. This interaction is dependent on the ribosome-associated complex (RAC). Interacts with SSE1. Interacts with FES1.

Its subcellular location is the cytoplasm. It carries out the reaction ATP + H2O = ADP + phosphate + H(+). In terms of biological role, ribosome-bound, Hsp70-type chaperone that assists in the cotranslational folding of newly synthesized proteins in the cytosol. Stimulates folding by interacting with nascent chains, binding to short, largely hydrophobic sequences exposed by unfolded proteins, thereby stabilizing longer, more slowly translated, and aggregation-prone nascent polypeptides and domains that cannot fold stably until fully synthesized. The Hsp70-protein substrate interaction depends on ATP-binding and on allosteric regulation between the NBD and the SBD. The ATP-bound state is characterized by a fast exchange rate of substrate (low affinity state), while in the ADP-bound state exchange is much slower (high affinity state). During the Hsp70 cycle, the chaperone switches between the ATP-bound state (open conformation) and the ADP-bound state (closed conformation) by major conformational rearrangements involving mainly the lid domain. Ssb cooperates with a specific Hsp40/Hsp70 co-chaperone termed the ribosome-associated complex (RAC), which stimulates the ATPase activity of the ribosome-associated pool of Ssbs and switches it to the high affinity substrate binding state. Hsp110 chaperone SSE1 and FES1 act as nucleotide exchange factors that cause substrate release. This chain is Ribosome-associated molecular chaperone SSB1 (SSB1), found in Candida albicans (strain WO-1) (Yeast).